We begin with the raw amino-acid sequence, 288 residues long: Polyamine aminopropyltransferase (288 aa).

A PABS domain is found at 9–238 (ETLHDQFGQY…GIMTFAWATD (230 aa)). Position 33 (Gln-33) interacts with S-methyl-5'-thioadenosine. Residues His-64 and Asp-88 each contribute to the spermidine site. Residues Glu-108 and 140–141 (DG) each bind S-methyl-5'-thioadenosine. Residue Asp-158 is the Proton acceptor of the active site. Residue 158–161 (DCTD) coordinates spermidine. Pro-165 contacts S-methyl-5'-thioadenosine.

This sequence belongs to the spermidine/spermine synthase family. Homodimer or homotetramer.

It localises to the cytoplasm. It catalyses the reaction S-adenosyl 3-(methylsulfanyl)propylamine + putrescine = S-methyl-5'-thioadenosine + spermidine + H(+). The protein operates within amine and polyamine biosynthesis; spermidine biosynthesis; spermidine from putrescine: step 1/1. Its function is as follows. Catalyzes the irreversible transfer of a propylamine group from the amino donor S-adenosylmethioninamine (decarboxy-AdoMet) to putrescine (1,4-diaminobutane) to yield spermidine. The sequence is that of Polyamine aminopropyltransferase from Escherichia coli O81 (strain ED1a).